The chain runs to 437 residues: MSESRSLAFPLRCVRDRQQAEAELQRLTRRTQTSQQKDVQGRVDVILKAVRERGDAAVCDFTERFDGFRPDPVAVPKHQLEQAWKALPENLRDALELAHRRISEFHQRQRPEDIRMEGAHGEQLGRRWRPVQRAGLYVPGGRAAYPSTVLMNAVPARVAGVEQVVICSPAGSNGQVNPVVLAAAHLAGVHTVMRIGGAQAIAAMAFGTESVPKVDVISGPGNIYVTLAKQAVYGQVGIDSLAGPSEVLVIADQSAQPEQVAADLLAQAEHDPLASSVLITTSHQLADGISSAIAQQLEDHPRREICEASLRDWGLVVVCDDLETCAQLSDSFAPEHLELLVERPEALADRIQHAGAIFLGPWSPEAVGDYLAGPNHTLPTCAAARFSGALSVETFMRHTSMIQFNRAALDATASAVCELAESEGLHSHAESVRKRLS.

Y137, Q199, and N222 together coordinate NAD(+). Residues S245, Q267, and H270 each contribute to the substrate site. Residues Q267 and H270 each coordinate Zn(2+). Active-site proton acceptor residues include E335 and H336. Substrate-binding residues include H336, D369, E423, and H428. Residue D369 participates in Zn(2+) binding. H428 serves as a coordination point for Zn(2+).

It belongs to the histidinol dehydrogenase family. Zn(2+) serves as cofactor.

The enzyme catalyses L-histidinol + 2 NAD(+) + H2O = L-histidine + 2 NADH + 3 H(+). It participates in amino-acid biosynthesis; L-histidine biosynthesis; L-histidine from 5-phospho-alpha-D-ribose 1-diphosphate: step 9/9. Functionally, catalyzes the sequential NAD-dependent oxidations of L-histidinol to L-histidinaldehyde and then to L-histidine. This chain is Histidinol dehydrogenase, found in Parasynechococcus marenigrum (strain WH8102).